Consider the following 313-residue polypeptide: Ankyrin repeat family A protein 2 (313 aa).

5 ANK repeats span residues 148-180 (ANSL…HTDE), 181-213 (EGFT…LLGK), 214-246 (GRES…EYDW), 247-279 (NGGT…IETD), and 280-313 (SGYN…NIKE).

As to quaternary structure, interacts (via ANK repeats) with CCDC8 (via PxLPxI/L motif); mediates the interaction with the 3M complex which is composed of CCDC8, CUL7 and OBSL1. Interacts (via ANK repeats) with HDAC4 (via PxLPxI/L motif). Interacts (via ANK repeats) with HDAC5 (via PxLPxI/L motif). Interacts (via ANK repeats) with LRP2/megalin (via PxLPxI/L motif). Interacts (via ANK repeats) with RFX7 (via PxLPxI/L motif). Interacts with AHRR. Interacts with NEK6.

It is found in the cytoplasm. The protein localises to the cytoskeleton. It localises to the membrane. Its function is as follows. May regulate the interaction between the 3M complex and the histone deacetylases HDAC4 and HDAC5. May also regulate LRP2/megalin. In Bos taurus (Bovine), this protein is Ankyrin repeat family A protein 2 (ANKRA2).